Here is a 363-residue protein sequence, read N- to C-terminus: UDP-N-acetylglucosamine--N-acetylmuramyl-(pentapeptide) pyrophosphoryl-undecaprenol N-acetylglucosamine transferase (363 aa).

UDP-N-acetyl-alpha-D-glucosamine contacts are provided by residues 10 to 12 (TGG), Asn124, Ser195, Ile250, and Gln295.

This sequence belongs to the glycosyltransferase 28 family. MurG subfamily.

The protein resides in the cell membrane. It carries out the reaction di-trans,octa-cis-undecaprenyl diphospho-N-acetyl-alpha-D-muramoyl-L-alanyl-D-glutamyl-meso-2,6-diaminopimeloyl-D-alanyl-D-alanine + UDP-N-acetyl-alpha-D-glucosamine = di-trans,octa-cis-undecaprenyl diphospho-[N-acetyl-alpha-D-glucosaminyl-(1-&gt;4)]-N-acetyl-alpha-D-muramoyl-L-alanyl-D-glutamyl-meso-2,6-diaminopimeloyl-D-alanyl-D-alanine + UDP + H(+). The protein operates within cell wall biogenesis; peptidoglycan biosynthesis. Cell wall formation. Catalyzes the transfer of a GlcNAc subunit on undecaprenyl-pyrophosphoryl-MurNAc-pentapeptide (lipid intermediate I) to form undecaprenyl-pyrophosphoryl-MurNAc-(pentapeptide)GlcNAc (lipid intermediate II). The chain is UDP-N-acetylglucosamine--N-acetylmuramyl-(pentapeptide) pyrophosphoryl-undecaprenol N-acetylglucosamine transferase from Listeria monocytogenes serotype 4b (strain CLIP80459).